The primary structure comprises 96 residues: Aspartyl/glutamyl-tRNA(Asn/Gln) amidotransferase subunit C (96 aa).

The protein belongs to the GatC family. Heterotrimer of A, B and C subunits.

The catalysed reaction is L-glutamyl-tRNA(Gln) + L-glutamine + ATP + H2O = L-glutaminyl-tRNA(Gln) + L-glutamate + ADP + phosphate + H(+). It carries out the reaction L-aspartyl-tRNA(Asn) + L-glutamine + ATP + H2O = L-asparaginyl-tRNA(Asn) + L-glutamate + ADP + phosphate + 2 H(+). Allows the formation of correctly charged Asn-tRNA(Asn) or Gln-tRNA(Gln) through the transamidation of misacylated Asp-tRNA(Asn) or Glu-tRNA(Gln) in organisms which lack either or both of asparaginyl-tRNA or glutaminyl-tRNA synthetases. The reaction takes place in the presence of glutamine and ATP through an activated phospho-Asp-tRNA(Asn) or phospho-Glu-tRNA(Gln). In Leptospira borgpetersenii serovar Hardjo-bovis (strain JB197), this protein is Aspartyl/glutamyl-tRNA(Asn/Gln) amidotransferase subunit C.